The sequence spans 390 residues: MKFVDEAVIKVQAGDGGNGVVSFWREKFVTNGGPDGGDGGDGGDVYMVADENLNTLIDYRFQRFYEAERGKNGGGGNCTGKSGKDKELRVPVGTRAVDIHTNEIIGEVAEHGKKVMIAKGGWHGLGNARFKSSVNRSPRQKTLGTKGELRDIRLELLLLADVGMLGMPNAGKSTFIRAVSAAKPKVADYPFTTLVPSLGVVSVLPEKSFVVADIPGLIEGAAEGAGLGIRFLKHLERCRVLLHMIDIMPADQSDPAHNALTIIDELEQYSEKLAKKPRWLVFNKVDLMSEEEADEIIQNIIDALAWEGDYFKISAANRQGTKELCMKLAEFMDTLPREAEEKTEAEKVDFTWDYNHKDGLAGREVITEDDDDWDDWDDEEDDGHVIYVRD.

The region spanning 1-159 (MKFVDEAVIK…RDIRLELLLL (159 aa)) is the Obg domain. An OBG-type G domain is found at 160–333 (ADVGMLGMPN…LCMKLAEFMD (174 aa)). Residues 166–173 (GMPNAGKS), 191–195 (FTTLV), 213–216 (DIPG), 283–286 (NKVD), and 314–316 (SAA) contribute to the GTP site. Mg(2+)-binding residues include S173 and T193.

This sequence belongs to the TRAFAC class OBG-HflX-like GTPase superfamily. OBG GTPase family. Monomer. Interacts with SpoT (AC Q9KNM2) in a yeast 2-hybrid assay. Mg(2+) serves as cofactor.

Its subcellular location is the cytoplasm. Functionally, depletion experiments lead to gene down regulation and a dramatic increase in ppGpp levels, like those seen in the stringent response. There is no change in cell morphology in depletion experiments, but cells are very sensitive to the DNA-damaging agent hydroxyurea and are very elongated. Overexpression reduces growth and leads to elongated cells. Overexpression of proteins with C-terminal deletions of 29 or 62 amino acids showed fewer elongated cells. An essential GTPase which binds GTP, GDP and possibly (p)ppGpp with moderate affinity, with high nucleotide exchange rates and a fairly low GTP hydrolysis rate. It may play a role in control of the cell cycle, stress response, ribosome biogenesis and in those bacteria that undergo differentiation, in morphogenesis control. GTPase activity is stimulated by 50S ribosomal subunits. The chain is GTPase Obg/CgtA from Vibrio cholerae serotype O1 (strain ATCC 39315 / El Tor Inaba N16961).